Reading from the N-terminus, the 431-residue chain is Polygalacturonase ADPG1 (431 aa).

Residues 1–23 (MARCCRHLAVFLCVLLMLSLCKA) form the signal peptide. 2 PbH1 repeats span residues 223–249 (CNKVEVSNVEITAPGDSPNTDGIHITN) and 250–271 (TQNIRVSNSDIGTGDDCISIED). The active-site Proton donor is aspartate 264. Residue histidine 287 is part of the active site. PbH1 repeat units lie at residues 303 to 324 (VSGINVDGAKFSESDNGVRIKT), 332 to 353 (AKNIKFQNIRMENVKNPIIIDQ), and 398 to 420 (CQGIVLENVKIKGGTASCKNANV).

The protein belongs to the glycosyl hydrolase 28 family. As to expression, expressed in flower buds and siliques, in the dehiscence zone of anthers (stomium cells) and maturing siliques. Expressed in stigma during pollen tube growth. Not expressed in seeds or in the floral part or leaf abscission zone but found at the junction between the seed and the funiculus at the site of seed abscission.

It is found in the secreted. The protein localises to the cell wall. Its subcellular location is the cytoplasm. The enzyme catalyses (1,4-alpha-D-galacturonosyl)n+m + H2O = (1,4-alpha-D-galacturonosyl)n + (1,4-alpha-D-galacturonosyl)m.. In terms of biological role, polygalacturonase involved in cell separation in the final stages of pod shatter and in anther dehiscence. Not involved in floral organ abscission. This is Polygalacturonase ADPG1 (ADPG1) from Arabidopsis thaliana (Mouse-ear cress).